The following is a 119-amino-acid chain: Beta-2-microglobulin (119 aa).

The N-terminal stretch at 1 to 20 (MACFVVVALLVLLSLSGLEA) is a signal peptide. The 90-residue stretch at 25–114 (PKIQVYSRHP…VTFSTPKTVK (90 aa)) folds into the Ig-like C1-type domain. Cysteine 45 and cysteine 100 form a disulfide bridge.

The protein belongs to the beta-2-microglobulin family. Heterodimer of an alpha chain and a beta chain. Beta-2-microglobulin is the beta-chain of major histocompatibility complex class I molecules.

It localises to the secreted. Its function is as follows. Component of the class I major histocompatibility complex (MHC). Involved in the presentation of peptide antigens to the immune system. This Leontopithecus chrysopygus (Golden-rumped lion tamarin) protein is Beta-2-microglobulin (B2M).